A 241-amino-acid chain; its full sequence is Large ribosomal subunit protein uL3 (241 aa).

Disordered regions lie at residues 139 to 164 (VSHR…KMPG) and 215 to 241 (DAPK…QEGA). Gln151 is subject to N5-methylglutamine.

Belongs to the universal ribosomal protein uL3 family. In terms of assembly, part of the 50S ribosomal subunit. Forms a cluster with proteins L14 and L19. In terms of processing, methylated by PrmB.

In terms of biological role, one of the primary rRNA binding proteins, it binds directly near the 3'-end of the 23S rRNA, where it nucleates assembly of the 50S subunit. The polypeptide is Large ribosomal subunit protein uL3 (Rhodopseudomonas palustris (strain BisB5)).